Reading from the N-terminus, the 117-residue chain is MSGNPDDDRLEELRQRKKEQLKQQQQGGDAEREAQQQQAQQAEQQKQAMLKQNLTDGARKRLNTIRMSKPEFAEQAEQQVLALAQSGRVQGRIDEDQMKEILRELKPDSQSFNINRR.

A disordered region spans residues 1–59 (MSGNPDDDRLEELRQRKKEQLKQQQQGGDAEREAQQQQAQQAEQQKQAMLKQNLTDGAR). The span at 11–21 (EELRQRKKEQL) shows a compositional bias: basic and acidic residues. A compositionally biased stretch (low complexity) spans 35 to 48 (QQQQAQQAEQQKQA).

This sequence belongs to the PDCD5 family.

The protein is DNA-binding protein VNG_2008H of Halobacterium salinarum (strain ATCC 700922 / JCM 11081 / NRC-1) (Halobacterium halobium).